Reading from the N-terminus, the 278-residue chain is Fe(II)/2-oxoglutarate-dependent dioxygenase nvfI (278 aa).

This sequence belongs to the asaB hydroxylase/desaturase family.

The enzyme catalyses asnovolin A + 2-oxoglutarate + 2 O2 = fumigatonoid A + succinate + CO2. It participates in secondary metabolite biosynthesis; terpenoid biosynthesis. Fe(II)/2-oxoglutarate-dependent dioxygenase; part of the gene cluster that mediates the biosynthesis of novofumigatonin, a heavily oxygenated meroterpenoid containing a unique orthoester moiety. The first step of the pathway is the synthesis of 3,5-dimethylorsellinic acid (DMOA) by the polyketide synthase nvfA via condensation of one acetyl-CoA starter unit with 3 malonyl-CoA units and 2 methylations. DMOA is then converted to farnesyl-DMOA by the farnesyltransferase nvfB. Epoxydation by FAD-dependent monooxygenase nvfK, followed by a protonation-initiated cyclization catalyzed by the terpene cyclase nvfL leads to the production of asnavolin H. The short chain dehydrogenase nvfC then as a 3-OH dehydrogenase of asnovolin H to yield chemesin D. There are two branches to synthesize asnovolin A from chemesin D. In one branch, chemesin D undergoes Baeyer-Villiger oxidation by nvfH, methylation by nvfJ, and enoyl reduction by the nvfM D enoylreductase that reduces the double bond between C-5'and C-6', to form respectively asnovolin I, asnovolin K, and asnovolin A. In the other branch, the methylation precedes the Baeyer-Villiger oxidation and the enoyl reduction to yield asnovolin A via the asnovolin J intermediate. Asnovolin A is further converted to fumigatonoid A by the Fe(II)/2-oxoglutarate-dependent dioxygenase nvfI that catalyzes an endoperoxidation reaction. The alpha/beta hydrolase nvfD then acts as an epimerase that converts fumigatonoid A to its C-5' epimer, which then undergoes spontaneous or nvfD-catalyzed lactonization. The following step utilizes the ketoreductase nvfG to produce fumigatonoid B. The dioxygenase nvfE further converts fumigatonoid B into fumigatonoid C. Finally the Fe(II)/2-oxoglutarate-dependent dioxygenase nvfF catalyzes two rounds of oxidation to transform fumigatonoid C into the end product, novofumigatonin A. The polypeptide is Fe(II)/2-oxoglutarate-dependent dioxygenase nvfI (Aspergillus novofumigatus (strain IBT 16806)).